Here is a 110-residue protein sequence, read N- to C-terminus: Phosphoribosyl-ATP pyrophosphatase (110 aa).

This sequence belongs to the PRA-PH family.

It localises to the cytoplasm. It carries out the reaction 1-(5-phospho-beta-D-ribosyl)-ATP + H2O = 1-(5-phospho-beta-D-ribosyl)-5'-AMP + diphosphate + H(+). It participates in amino-acid biosynthesis; L-histidine biosynthesis; L-histidine from 5-phospho-alpha-D-ribose 1-diphosphate: step 2/9. This Pseudomonas fluorescens (strain Pf0-1) protein is Phosphoribosyl-ATP pyrophosphatase.